Reading from the N-terminus, the 305-residue chain is UDP-3-O-acyl-N-acetylglucosamine deacetylase (305 aa).

Residues H79, H238, and D242 each coordinate Zn(2+). Catalysis depends on H265, which acts as the Proton donor.

The protein belongs to the LpxC family. It depends on Zn(2+) as a cofactor.

It catalyses the reaction a UDP-3-O-[(3R)-3-hydroxyacyl]-N-acetyl-alpha-D-glucosamine + H2O = a UDP-3-O-[(3R)-3-hydroxyacyl]-alpha-D-glucosamine + acetate. It participates in glycolipid biosynthesis; lipid IV(A) biosynthesis; lipid IV(A) from (3R)-3-hydroxytetradecanoyl-[acyl-carrier-protein] and UDP-N-acetyl-alpha-D-glucosamine: step 2/6. Catalyzes the hydrolysis of UDP-3-O-myristoyl-N-acetylglucosamine to form UDP-3-O-myristoylglucosamine and acetate, the committed step in lipid A biosynthesis. This chain is UDP-3-O-acyl-N-acetylglucosamine deacetylase, found in Vibrio cholerae serotype O1 (strain ATCC 39541 / Classical Ogawa 395 / O395).